The chain runs to 266 residues: Putative carbamate hydrolase RutD (266 aa).

The 103-residue stretch at 14-116 (PVVVLISGLG…VLVSVNGWLR (103 aa)) folds into the AB hydrolase-1 domain.

It belongs to the AB hydrolase superfamily. Hydrolase RutD family.

The catalysed reaction is carbamate + 2 H(+) = NH4(+) + CO2. Involved in pyrimidine catabolism. May facilitate the hydrolysis of carbamate, a reaction that can also occur spontaneously. The sequence is that of Putative carbamate hydrolase RutD from Escherichia coli O81 (strain ED1a).